The chain runs to 161 residues: Nucleotide-binding protein Mmc1_1670 (161 aa).

It belongs to the YajQ family.

In terms of biological role, nucleotide-binding protein. This chain is Nucleotide-binding protein Mmc1_1670, found in Magnetococcus marinus (strain ATCC BAA-1437 / JCM 17883 / MC-1).